The following is a 99-amino-acid chain: Large ribosomal subunit protein bL25 (99 aa).

It belongs to the bacterial ribosomal protein bL25 family. In terms of assembly, part of the 50S ribosomal subunit; part of the 5S rRNA/L5/L18/L25 subcomplex. Contacts the 5S rRNA. Binds to the 5S rRNA independently of L5 and L18.

Functionally, this is one of the proteins that binds to the 5S RNA in the ribosome where it forms part of the central protuberance. This chain is Large ribosomal subunit protein bL25, found in Nostoc sp. (strain PCC 7120 / SAG 25.82 / UTEX 2576).